Reading from the N-terminus, the 395-residue chain is F-box/kelch-repeat protein At4g39570 (395 aa).

Residues 1–25 show a composition bias toward basic residues; it reads MSSPERKRKRVTSTKNPSVKKKKKI. Positions 1 to 29 are disordered; it reads MSSPERKRKRVTSTKNPSVKKKKKISPVP. The 47-residue stretch at 29-75 folds into the F-box domain; sequence PTPIPSLPDDLLVSIFARVSRLYYPILSLVSKSFRSLLRSPELYETR. Kelch repeat units follow at residues 150–197 and 198–246; these read DIYF…VIDG and KIYV…RSAY.

This is F-box/kelch-repeat protein At4g39570 from Arabidopsis thaliana (Mouse-ear cress).